We begin with the raw amino-acid sequence, 442 residues long: Signal recognition particle 54 kDa protein (442 aa).

GTP contacts are provided by residues 106 to 113 (GLQGSGKT), 186 to 190 (DTAGR), and 244 to 247 (TKLD).

This sequence belongs to the GTP-binding SRP family. SRP54 subfamily. As to quaternary structure, part of the signal recognition particle protein translocation system, which is composed of SRP and FtsY. Archaeal SRP consists of a 7S RNA molecule of 300 nucleotides and two protein subunits: SRP54 and SRP19.

The protein localises to the cytoplasm. The catalysed reaction is GTP + H2O = GDP + phosphate + H(+). Involved in targeting and insertion of nascent membrane proteins into the cytoplasmic membrane. Binds to the hydrophobic signal sequence of the ribosome-nascent chain (RNC) as it emerges from the ribosomes. The SRP-RNC complex is then targeted to the cytoplasmic membrane where it interacts with the SRP receptor FtsY. The sequence is that of Signal recognition particle 54 kDa protein from Methanothermobacter thermautotrophicus (strain ATCC 29096 / DSM 1053 / JCM 10044 / NBRC 100330 / Delta H) (Methanobacterium thermoautotrophicum).